We begin with the raw amino-acid sequence, 389 residues long: Probable nitrate transporter NarT (389 aa).

Transmembrane regions (helical) follow at residues 14 to 34 (TLSL…MPFI), 45 to 65 (ISII…PFGY), 69 to 89 (IVGA…PIFF), 97 to 117 (GMLM…SVGV), 139 to 159 (GNIG…IIGW), 161 to 181 (TTVR…FIFG), 211 to 231 (WYFI…NYLV), 246 to 266 (GVFI…GDKF), 268 to 288 (AVKV…ILGI), 294 to 314 (LFTV…GLIF), 331 to 351 (IVSM…TYVA), and 353 to 373 (LTGS…IALF).

This sequence belongs to the major facilitator superfamily. Nitrate/nitrite porter (TC 2.A.1.8) family.

Its subcellular location is the cell membrane. In terms of biological role, probably required for nitrate uptake under anoxic conditions. Also possibly involved in excretion of nitrite produced by the dissimilatory reduction of nitrate. The chain is Probable nitrate transporter NarT (narT) from Staphylococcus aureus (strain bovine RF122 / ET3-1).